Here is a 345-residue protein sequence, read N- to C-terminus: Phosphoribosylformylglycinamidine cyclo-ligase (345 aa).

It belongs to the AIR synthase family.

The protein localises to the cytoplasm. It carries out the reaction 2-formamido-N(1)-(5-O-phospho-beta-D-ribosyl)acetamidine + ATP = 5-amino-1-(5-phospho-beta-D-ribosyl)imidazole + ADP + phosphate + H(+). Its pathway is purine metabolism; IMP biosynthesis via de novo pathway; 5-amino-1-(5-phospho-D-ribosyl)imidazole from N(2)-formyl-N(1)-(5-phospho-D-ribosyl)glycinamide: step 2/2. The sequence is that of Phosphoribosylformylglycinamidine cyclo-ligase from Pectobacterium atrosepticum (strain SCRI 1043 / ATCC BAA-672) (Erwinia carotovora subsp. atroseptica).